The sequence spans 302 residues: Oxygen-dependent coproporphyrinogen-III oxidase (302 aa).

Ser-94 contributes to the substrate binding site. 2 residues coordinate a divalent metal cation: His-98 and His-108. His-108 (proton donor) is an active-site residue. 110–112 (NVR) is a substrate binding site. 2 residues coordinate a divalent metal cation: His-147 and His-177. An important for dimerization region spans residues 242–277 (YVEFNLVYDRGTLFGLQTGGRTESILMSMPPLVRWQ). 260-262 (GGR) is a substrate binding site.

Belongs to the aerobic coproporphyrinogen-III oxidase family. In terms of assembly, homodimer. The cofactor is a divalent metal cation.

The protein localises to the cytoplasm. The enzyme catalyses coproporphyrinogen III + O2 + 2 H(+) = protoporphyrinogen IX + 2 CO2 + 2 H2O. Its pathway is porphyrin-containing compound metabolism; protoporphyrin-IX biosynthesis; protoporphyrinogen-IX from coproporphyrinogen-III (O2 route): step 1/1. Involved in the heme biosynthesis. Catalyzes the aerobic oxidative decarboxylation of propionate groups of rings A and B of coproporphyrinogen-III to yield the vinyl groups in protoporphyrinogen-IX. In Shewanella baltica (strain OS155 / ATCC BAA-1091), this protein is Oxygen-dependent coproporphyrinogen-III oxidase.